The primary structure comprises 292 residues: Elongation factor Ts (292 aa).

The tract at residues 79–82 is involved in Mg(2+) ion dislocation from EF-Tu; sequence TDFV.

The protein belongs to the EF-Ts family.

Its subcellular location is the cytoplasm. In terms of biological role, associates with the EF-Tu.GDP complex and induces the exchange of GDP to GTP. It remains bound to the aminoacyl-tRNA.EF-Tu.GTP complex up to the GTP hydrolysis stage on the ribosome. This chain is Elongation factor Ts (tsf), found in Idiomarina loihiensis (strain ATCC BAA-735 / DSM 15497 / L2-TR).